The chain runs to 438 residues: MGRDRISELPDGLLNHILMYLHIEESIRTSVLSSRWRKLWLKVPGLDVNVHDFPADGNLFESLMDKFLEVNRGRLQNFKLNYESNLYYLMDRFVPWIATVVDRGIQHLDVTATDCPPWTIDFMPANICKSKTLVSLKLVNVGLDTPKFVVSLPCLKIMHLEDIFYSPLIAENLISGCPVLEDLTIVRNHEDFLNFLRVMSQTLKNFRLTFDWGMGSNDFSVEIDAPGLKYMSFRDSQSDRIVVKNLSSLVKIDLDTEFNLKFGLGSPLEPEDLTKRDIIRDFLTGISSVKHMIISHPTLEVLYRYSKIGQLPKFHNLYHLQAVFSSSLLQLLPAFLEICPNLKNLILDYSISAEPEQIDFTNLPRCLISTLEYVEIKQLTMREESGIKLVKYFLENSAVLKKLTLSFIDSPMTNQESEIYMQLLTSTKRSRGCHVLIL.

Residues 3 to 49 (RDRISELPDGLLNHILMYLHIEESIRTSVLSSRWRKLWLKVPGLDVN) form the F-box domain. 2 LRR repeats span residues 246 to 275 (LSSL…DLTK) and 286 to 310 (ISSV…KIGQ). Positions 355–407 (PEQIDFTNLPRCLISTLEYVEIKQLTMREESGIKLVKYFLENSAVLKKLTLSF) constitute an FBD domain.

The sequence is that of Putative F-box/FBD/LRR-repeat protein At5g44950 from Arabidopsis thaliana (Mouse-ear cress).